Consider the following 472-residue polypeptide: Ribosomal protein uS12 methylthiotransferase RimO (472 aa).

One can recognise an MTTase N-terminal domain in the interval 33 to 143 (NRIGFVSLGC…VLKHVHKYVP (111 aa)). The [4Fe-4S] cluster site is built by C42, C78, C107, C175, C179, and C182. Residues 161 to 398 (LTPKHYAYLK…MEVQAEISAE (238 aa)) form the Radical SAM core domain. The TRAM domain occupies 401 to 467 (ARFVGRTLDI…EHDLWAEVVD (67 aa)).

Belongs to the methylthiotransferase family. RimO subfamily. Requires [4Fe-4S] cluster as cofactor.

The protein resides in the cytoplasm. The catalysed reaction is L-aspartate(89)-[ribosomal protein uS12]-hydrogen + (sulfur carrier)-SH + AH2 + 2 S-adenosyl-L-methionine = 3-methylsulfanyl-L-aspartate(89)-[ribosomal protein uS12]-hydrogen + (sulfur carrier)-H + 5'-deoxyadenosine + L-methionine + A + S-adenosyl-L-homocysteine + 2 H(+). In terms of biological role, catalyzes the methylthiolation of an aspartic acid residue of ribosomal protein uS12. The sequence is that of Ribosomal protein uS12 methylthiotransferase RimO from Shewanella baltica (strain OS155 / ATCC BAA-1091).